Reading from the N-terminus, the 801-residue chain is Transducin beta-like protein 3 (801 aa).

The residue at position 2 (alanine 2) is an N-acetylalanine. WD repeat units follow at residues 64 to 105, 107 to 146, 149 to 190, 193 to 232, 245 to 284, 290 to 329, 332 to 372, 374 to 413, 419 to 459, 477 to 516, 519 to 560, 562 to 602, and 604 to 642; these read EDQE…RLWK, IHTA…GTHH, GSPG…CLAV, AHYS…TTRT, LPEQ…CVYT, GLRQ…LQKQ, GYSE…CQIL, GHTD…QVAC, GHTH…LAKS, CHDK…LLGV, GHRR…KTFE, HDAS…RTLD, and HEDK…EQAE. Serine 257 is subject to Phosphoserine. Lysine 407 is covalently cross-linked (Glycyl lysine isopeptide (Lys-Gly) (interchain with G-Cter in SUMO2)).

As to quaternary structure, part of the small subunit (SSU) processome, composed of more than 70 proteins and the RNA chaperone small nucleolar RNA (snoRNA) U3.

It localises to the nucleus. Its subcellular location is the nucleolus. Part of the small subunit (SSU) processome, first precursor of the small eukaryotic ribosomal subunit. During the assembly of the SSU processome in the nucleolus, many ribosome biogenesis factors, an RNA chaperone and ribosomal proteins associate with the nascent pre-rRNA and work in concert to generate RNA folding, modifications, rearrangements and cleavage as well as targeted degradation of pre-ribosomal RNA by the RNA exosome. The chain is Transducin beta-like protein 3 (Tbl3) from Mus musculus (Mouse).